Here is a 92-residue protein sequence, read N- to C-terminus: MSDAAAPAQAPAPPTHAPLTPHKHCNTRDRLFGQDPPAVASPKRVTPTFKSQIFDDVPASPSRTPKRTVQVVSRNPVTGEIKPSPSQQQVAA.

The interval 1-92 is disordered; that stretch reads MSDAAAPAQA…PSPSQQQVAA (92 aa).

This is an uncharacterized protein from Caenorhabditis elegans.